Consider the following 333-residue polypeptide: Holliday junction branch migration complex subunit RuvB (333 aa).

The tract at residues 1 to 182 (MDERLLSGES…FGVLSRLEYY (182 aa)) is large ATPase domain (RuvB-L). ATP is bound by residues leucine 21, arginine 22, glycine 63, lysine 66, threonine 67, threonine 68, 129 to 131 (EDF), arginine 172, tyrosine 182, and arginine 219. Mg(2+) is bound at residue threonine 67. The tract at residues 183 to 253 (TVDQLSAIVE…ITQMALELLQ (71 aa)) is small ATPAse domain (RuvB-S). The interval 256–333 (KLGLDHIDHK…EHFGMEMPKV (78 aa)) is head domain (RuvB-H). DNA-binding residues include arginine 311 and arginine 316.

The protein belongs to the RuvB family. As to quaternary structure, homohexamer. Forms an RuvA(8)-RuvB(12)-Holliday junction (HJ) complex. HJ DNA is sandwiched between 2 RuvA tetramers; dsDNA enters through RuvA and exits via RuvB. An RuvB hexamer assembles on each DNA strand where it exits the tetramer. Each RuvB hexamer is contacted by two RuvA subunits (via domain III) on 2 adjacent RuvB subunits; this complex drives branch migration. In the full resolvosome a probable DNA-RuvA(4)-RuvB(12)-RuvC(2) complex forms which resolves the HJ.

The protein resides in the cytoplasm. The enzyme catalyses ATP + H2O = ADP + phosphate + H(+). Its function is as follows. The RuvA-RuvB-RuvC complex processes Holliday junction (HJ) DNA during genetic recombination and DNA repair, while the RuvA-RuvB complex plays an important role in the rescue of blocked DNA replication forks via replication fork reversal (RFR). RuvA specifically binds to HJ cruciform DNA, conferring on it an open structure. The RuvB hexamer acts as an ATP-dependent pump, pulling dsDNA into and through the RuvAB complex. RuvB forms 2 homohexamers on either side of HJ DNA bound by 1 or 2 RuvA tetramers; 4 subunits per hexamer contact DNA at a time. Coordinated motions by a converter formed by DNA-disengaged RuvB subunits stimulates ATP hydrolysis and nucleotide exchange. Immobilization of the converter enables RuvB to convert the ATP-contained energy into a lever motion, pulling 2 nucleotides of DNA out of the RuvA tetramer per ATP hydrolyzed, thus driving DNA branch migration. The RuvB motors rotate together with the DNA substrate, which together with the progressing nucleotide cycle form the mechanistic basis for DNA recombination by continuous HJ branch migration. Branch migration allows RuvC to scan DNA until it finds its consensus sequence, where it cleaves and resolves cruciform DNA. This Bacillus anthracis (strain A0248) protein is Holliday junction branch migration complex subunit RuvB.